Reading from the N-terminus, the 1151-residue chain is Importin beta (1151 aa).

24 HEAT repeats span residues 1 to 36 (MDLA…KQEE), 37 to 82 (PASY…GNGN), 83 to 132 (PECV…VAQF), 133 to 175 (PEFF…TKIG), 176 to 222 (GKAI…DSVI), 223 to 269 (PNSV…AVLK), 270 to 316 (PMVK…RAKK), 317 to 377 (AISE…KVIF), 378 to 416 (PLIK…LVTK), 417 to 453 (EDIV…EDYA), 454 to 495 (PTFQ…HLKK), 496 to 540 (AETY…LKND), 541 to 593 (FADM…AGTL), 594 to 642 (PQLF…PETF), 643 to 704 (PKYM…MRKT), 705 to 756 (PAAF…TVAS), 757 to 811 (PPAV…SYTE), 812 to 880 (TVNK…ALGD), 881 to 932 (LSLD…KYLS), 933 to 978 (PANS…YEGD), 979 to 1027 (PGLA…AQAF), 1028 to 1074 (PTEL…ARND), 1075 to 1120 (PNFM…VLTQ), and 1121 to 1151 (IAGH…SVRQ).

This sequence belongs to the importin beta family.

It localises to the nucleus intermembrane space. Its subcellular location is the cytoplasm. It is found in the nucleus. Functionally, functions in nuclear protein import as nuclear transport receptor. Involved in encystation process. Constitutive expression enhances cyst production and increases transcription of endogenous genes involved in encystation. Level of mRNA of the transcriptional factor myb1-like protein increases in early stages of the encystation process followed by increased mRNAs of the cyst wall proteins cwp1-3. The sequence is that of Importin beta from Giardia intestinalis (strain ATCC 50803 / WB clone C6) (Giardia lamblia).